Consider the following 373-residue polypeptide: UDP-glucose 4-epimerase 3 (373 aa).

27–58 is an NAD(+) binding site; that stretch reads SVLVTGGAGYIGTHTVLRLLEKGFAVTVVDNF. Position 153 (serine 153) interacts with substrate. The Proton acceptor role is filled by tyrosine 177.

The protein belongs to the NAD(P)-dependent epimerase/dehydratase family. Requires NAD(+) as cofactor.

It carries out the reaction UDP-alpha-D-glucose = UDP-alpha-D-galactose. Its pathway is carbohydrate metabolism; galactose metabolism. Catalyzes the interconversion between UDP-glucose and UDP-galactose. The polypeptide is UDP-glucose 4-epimerase 3 (UGE-3) (Oryza sativa subsp. japonica (Rice)).